We begin with the raw amino-acid sequence, 89 residues long: Bombyxin A-2 (89 aa).

The first 19 residues, 1–19 (MKILLAIALMLSTVMWVST), serve as a signal peptide directing secretion. Position 20 is a pyrrolidone carboxylic acid (Q20). 3 disulfide bridges follow: C29–C76, C41–C89, and C75–C80. A propeptide spans 50–68 (SDAQFASYGSAWLMPYSAG) (c peptide like).

Belongs to the insulin family. Heterodimer of a B chain and an A chain linked by two disulfide bonds.

It localises to the secreted. Its function is as follows. Brain peptide responsible for activation of prothoracic glands to produce ecdysone in insects. The protein is Bombyxin A-2 (BBXA2) of Bombyx mori (Silk moth).